The primary structure comprises 402 residues: GPI mannosyltransferase 1 (402 aa).

The next 10 membrane-spanning stretches (helical) occupy residues 5-25 (VILL…YGIF), 79-99 (WIHM…VMII), 108-128 (LTKQ…ITIS), 162-182 (LSIH…IYLL), 191-211 (IWRL…PTYF), 238-258 (FSIW…SQSI), 260-280 (LSKL…YLLW), 309-329 (QYFI…TITW), 333-353 (VVCI…AYLL), and 365-385 (LFFG…VFIT).

This sequence belongs to the PIGM family.

The protein resides in the endoplasmic reticulum membrane. It functions in the pathway glycolipid biosynthesis; glycosylphosphatidylinositol-anchor biosynthesis. In terms of biological role, mannosyltransferase involved in glycosylphosphatidylinositol-anchor biosynthesis. Transfers the first alpha-1,4-mannose to GlcN-acyl-PI during GPI precursor assembly. Required for cell wall integrity. This chain is GPI mannosyltransferase 1 (GPI14), found in Kluyveromyces lactis (strain ATCC 8585 / CBS 2359 / DSM 70799 / NBRC 1267 / NRRL Y-1140 / WM37) (Yeast).